We begin with the raw amino-acid sequence, 199 residues long: Photosystem I reaction center subunit XI (199 aa).

2 helical membrane-spanning segments follow: residues 108–128 (LTAG…LFVL) and 165–185 (FWLG…TLHL).

It belongs to the PsaL family.

It localises to the cellular thylakoid membrane. This Prochlorococcus marinus (strain MIT 9301) protein is Photosystem I reaction center subunit XI.